Here is a 1068-residue protein sequence, read N- to C-terminus: MTPTVPELEFAQATAFESNVPPLFPGRAGPDDGADRLRLRLAVRGWARPLDLIAASNSPDDVMAILGALAAEVETAVQTRPNQWYLSLAARKRELARRDDAQLRAAASASVPGDDDDPVLHAMRIALADAEPTLSALGTDVLAALGNACDWLGERWRHAVGAQRIAGELASRALDADLRRMTRDPMVGRSHRDTLARLIGFATAATQTPLSVAYVYGGGGAGKTTLLSFLQRDLSQRAEPVPVVRIDFDEPAIDPTRMVTLNIALVEQLARSVPAVCDRASDMLPALRDTALVQHDAGLSRGGPRKRIKSSRPESMLKAESVASQAASDEGSILYRLLAPDVVAGPILIVFDTAELVLAQSDHVASSLVSWLGFLHNEAGARDLRLVIAGRDPPDDPDLGHAANSLLSRLKDTGARIETPIGLPELDPAEAQQLLRNCGVDDPTAAAEAAAAVPGNPLLLRITADALLQGEAELRESVRRAHRDSRIDADSARNYLLRRVVAHVRDPIARPYVLAATYSPVVTAKLLEEVVIPAVDRSEREPGPGIPANKKAATAKAKRVFDALASTYWLTRQTLRSETVPFNREIRAFALKLLAATPEGALLERDVRQSAAIHHLRRRSADDRALALYHLAVLGHPYTVPRDLASVQTVLRDVIEELPADLRNRLAPPVGSVAPGVARGVARSSIDDMSDSDWQRYLEGDERSKRAGEGAQMVKADRAREALDLYLARPTRPPGLPPTFVIQAQADLGEWDEGIADIDAILEREADDWLARKSIGPEALSRIYWITRLALQAYGRLSTPHAMLLRNASETATGPGLSTLPALIAVAETMSGEPIMAGRMRSQALKTDAAGRTLLCPIHGHLPETIELFDAGIAVVQSDWRQRMIQLAPARLIRANEAHLRDLQSRLDALHAKPIAQVNQLFNKMRTGIAVEPTTMAGLNSAVLLLRGLTPEFYRPLREALLALCENGVASPMMRHAVDPLFERMSIRPAEMEPATFYRRLSNNPNAWCTAFIVYADRCRLLPGLCESLARYADSPKSRRIASSFLAWDKALCRGTSSDWGQPAKTRK.

217 to 224 serves as a coordination point for ATP; that stretch reads GGGGAGKT.

Functionally, involved in defense against bacteriophages. When this probable 4 gene operon (bGSDM-FE772_23060-FE772_23065-FE772_23070) is inserted into E.coli it provides nearly 100-fold protection against phages T5 and T6 and about 8-fold against phage T4. The operon without bGSDM no longer protects against phage. Probably a nucleotide hydrolase, possibly of ATP. This is Probable ATPase FE772_23070 from Lysobacter enzymogenes.